Consider the following 114-residue polypeptide: Protein D2 (114 aa).

This sequence belongs to the phosphatidylethanolamine-binding protein family.

This chain is Protein D2 (D2), found in Onchocerca volvulus.